Here is a 288-residue protein sequence, read N- to C-terminus: MSNLKQLRTRIKSVKSTQKITKAMQLVSASKMTKIKTQIANSNFYIEAINKMMSDICSMTSCELSIEEQKFFNTMPSKINLLIVMTSERGLCGMFNYSIIKQVKNDIKELTNKGEQIKLIIIGKKGYEALKRQYANYINSYFEFTKIHSENLILQVKEKIMCAVKNLEVSNCIIYFNKFKNAMTQIPTKQKILPIEKHQDYSVVANDYFEYEGKNLISNLINLYVHAKINYALLQNIVSEEGARMTAMENATNNANDLISKLVLKLNRSRQTIITTELIEIIAGAEAV.

This sequence belongs to the ATPase gamma chain family. F-type ATPases have 2 components, CF(1) - the catalytic core - and CF(0) - the membrane proton channel. CF(1) has five subunits: alpha(3), beta(3), gamma(1), delta(1), epsilon(1). CF(0) has three main subunits: a, b and c.

It localises to the cell inner membrane. Produces ATP from ADP in the presence of a proton gradient across the membrane. The gamma chain is believed to be important in regulating ATPase activity and the flow of protons through the CF(0) complex. This Rickettsia prowazekii (strain Madrid E) protein is ATP synthase gamma chain.